Here is a 131-residue protein sequence, read N- to C-terminus: Ribosomally synthesized cyclic peptide phomopsin precursor gigA (131 aa).

Positions 1–18 (MQFTLIFFYATLAAFGLA) are cleaved as a signal peptide. Propeptides lie at residues 19–38 (APSEQVGRDVVQEGDELDKR), 48–65 (ADLVDGDDVQEGDKLDKR), 75–92 (ADMVDGDDVQEGDKLDKR), 102–119 (ADMVDGDDVQEGDELAKR), and 129–131 (ADM).

GigA is processed by several endopeptidases including kexin proteases to produce 2 identical copies of the nonaxapeptide Ile-Asn-Phe-Lys-Ile-Pro-Tyr-Thr-Gly, one copy of the nonaketide Ile-Gly-Phe-Lys-Leu-Pro-Tyr-Arg-Gly and one copy of the nonaketide Pro-Asn-Phe-Lys-Met-Pro-Tyr-Arg-Gly, that are further modified into phomapsins B, C and A, respectively. After being excised from the precursor peptide, the core peptides are cyclized and modified post-translationally by enzymes encoded within the gene cluster. Epichloecyclin biosynthesis requires only dimethylation of the side-chain amino group of the conserved lysine for completion.

The protein operates within mycotoxin biosynthesis. Functionally, ribosomally synthesized cyclic peptide phomopsin precursor; part of the gene cluster that mediates the biosynthesis of the epichloecyclins, a group of nonapeptides, with a likely cyclic structure and dimethylation of the conserved lysine. The gigA translated product contains 4 repeated peptide embedding the nonapeptide Ile-Asn-Phe-Lys-Ile-Pro-Tyr-Thr-Gly in repeats 1 and 2, Ile-Gly-Phe-Lys-Leu-Pro-Tyr-Arg-Gly in repeat 3, and Pro-Asn-Phe-Lys-Met-Pro-Tyr-Arg-Gly in repeat 4 that are converted into epichloecyclins B, C and A, respectively. Moreover, removal of the last Gly residue in epichloecyclins B and C leads to epichloecyclins D and E, respectively. The sequence is that of Ribosomally synthesized cyclic peptide phomopsin precursor gigA (nc25) from Epichloe festucae (strain Fl1).